Reading from the N-terminus, the 202-residue chain is Probable thymidylate kinase (202 aa).

13 to 20 (GIDGSGKT) is a binding site for ATP.

It belongs to the thymidylate kinase family.

It catalyses the reaction dTMP + ATP = dTDP + ADP. This is Probable thymidylate kinase from Picrophilus torridus (strain ATCC 700027 / DSM 9790 / JCM 10055 / NBRC 100828 / KAW 2/3).